Here is a 99-residue protein sequence, read N- to C-terminus: Large ribosomal subunit protein uL23 (99 aa).

This sequence belongs to the universal ribosomal protein uL23 family. As to quaternary structure, part of the 50S ribosomal subunit. Contacts protein L29, and trigger factor when it is bound to the ribosome.

One of the early assembly proteins it binds 23S rRNA. One of the proteins that surrounds the polypeptide exit tunnel on the outside of the ribosome. Forms the main docking site for trigger factor binding to the ribosome. This is Large ribosomal subunit protein uL23 from Oenococcus oeni (strain ATCC BAA-331 / PSU-1).